The primary structure comprises 236 residues: tRNA (guanine-N(7)-)-methyltransferase (236 aa).

Positions 68, 93, 120, and 143 each coordinate S-adenosyl-L-methionine. The active site involves aspartate 143. Substrate-binding positions include lysine 147, aspartate 179, and 212 to 215 (TKFE).

The protein belongs to the class I-like SAM-binding methyltransferase superfamily. TrmB family.

It catalyses the reaction guanosine(46) in tRNA + S-adenosyl-L-methionine = N(7)-methylguanosine(46) in tRNA + S-adenosyl-L-homocysteine. It functions in the pathway tRNA modification; N(7)-methylguanine-tRNA biosynthesis. Its function is as follows. Catalyzes the formation of N(7)-methylguanine at position 46 (m7G46) in tRNA. This Nitrosococcus oceani (strain ATCC 19707 / BCRC 17464 / JCM 30415 / NCIMB 11848 / C-107) protein is tRNA (guanine-N(7)-)-methyltransferase.